A 162-amino-acid chain; its full sequence is ATP synthase subunit b 1 (162 aa).

A helical transmembrane segment spans residues 1–21 (MLLTAEFWVAVAFVAFLVIVW).

The protein belongs to the ATPase B chain family. As to quaternary structure, F-type ATPases have 2 components, F(1) - the catalytic core - and F(0) - the membrane proton channel. F(1) has five subunits: alpha(3), beta(3), gamma(1), delta(1), epsilon(1). F(0) has three main subunits: a(1), b(2) and c(10-14). The alpha and beta chains form an alternating ring which encloses part of the gamma chain. F(1) is attached to F(0) by a central stalk formed by the gamma and epsilon chains, while a peripheral stalk is formed by the delta and b chains.

The protein localises to the cell inner membrane. Its function is as follows. F(1)F(0) ATP synthase produces ATP from ADP in the presence of a proton or sodium gradient. F-type ATPases consist of two structural domains, F(1) containing the extramembraneous catalytic core and F(0) containing the membrane proton channel, linked together by a central stalk and a peripheral stalk. During catalysis, ATP synthesis in the catalytic domain of F(1) is coupled via a rotary mechanism of the central stalk subunits to proton translocation. In terms of biological role, component of the F(0) channel, it forms part of the peripheral stalk, linking F(1) to F(0). The polypeptide is ATP synthase subunit b 1 (Methylorubrum extorquens (strain PA1) (Methylobacterium extorquens)).